Consider the following 190-residue polypeptide: Signal peptidase I W (190 aa).

Residues 4–24 traverse the membrane as a helical segment; that stretch reads ISNILYVIIFTLIIVLTLVVI. Residue S45 is part of the active site. Residues 143–163 traverse the membrane as a helical segment; the sequence is PIGTAVLLIVPGVMLLVYAFV.

The protein belongs to the peptidase S26B family.

It is found in the cell membrane. It carries out the reaction Cleavage of hydrophobic, N-terminal signal or leader sequences from secreted and periplasmic proteins.. Functionally, required for the cleavage of the signal sequence of TasA and TapA, which are involved in biofilm formation. This is Signal peptidase I W from Bacillus subtilis (strain 168).